A 789-amino-acid polypeptide reads, in one-letter code: Protein translocase subunit SecA (789 aa).

ATP-binding positions include Q85, 103-107 (GEGKT), and D492.

Belongs to the SecA family. Monomer and homodimer. Part of the essential Sec protein translocation apparatus which comprises SecA, SecYEG and auxiliary proteins SecDF. Other proteins may also be involved.

The protein resides in the cell membrane. The protein localises to the cytoplasm. The catalysed reaction is ATP + H2O + cellular proteinSide 1 = ADP + phosphate + cellular proteinSide 2.. Functionally, part of the Sec protein translocase complex. Interacts with the SecYEG preprotein conducting channel. Has a central role in coupling the hydrolysis of ATP to the transfer of proteins into and across the cell membrane, serving as an ATP-driven molecular motor driving the stepwise translocation of polypeptide chains across the membrane. The polypeptide is Protein translocase subunit SecA (Limosilactobacillus fermentum (strain NBRC 3956 / LMG 18251) (Lactobacillus fermentum)).